Reading from the N-terminus, the 180-residue chain is MAVRARRLQPAKVAAVESLTRDLGEASSYIFTEYRGLTVEQLTALRRALREFSCVYRVVRNNFANIAFTSLNMTVGEYLVGPTAIALVDTEHANGVARVLFDFAKEVPALVVKGAILDGEVFDASKVEAYSKLPGKKELVSMFLSALNATTVKFVRVLQAVMDKRDEGVEVSVVSGGDSS.

The protein belongs to the universal ribosomal protein uL10 family. In terms of assembly, part of the ribosomal stalk of the 50S ribosomal subunit. The N-terminus interacts with L11 and the large rRNA to form the base of the stalk. The C-terminus forms an elongated spine to which L12 dimers bind in a sequential fashion forming a multimeric L10(L12)X complex.

Its function is as follows. Forms part of the ribosomal stalk, playing a central role in the interaction of the ribosome with GTP-bound translation factors. In Treponema pallidum (strain Nichols), this protein is Large ribosomal subunit protein uL10 (rplJ).